The chain runs to 253 residues: Zinc import ATP-binding protein ZnuC (253 aa).

One can recognise an ABC transporter domain in the interval 6–227; it reads VTLNKISVTF…FGNRGAEQLA (222 aa). 38 to 45 contacts ATP; sequence GPNGAGKS.

Belongs to the ABC transporter superfamily. Zinc importer (TC 3.A.1.15.5) family. The complex is composed of two ATP-binding proteins (ZnuC), two transmembrane proteins (ZnuB) and a solute-binding protein (ZnuA).

It localises to the cell inner membrane. The catalysed reaction is Zn(2+)(out) + ATP(in) + H2O(in) = Zn(2+)(in) + ADP(in) + phosphate(in) + H(+)(in). Part of the ABC transporter complex ZnuABC involved in zinc import. Responsible for energy coupling to the transport system. This chain is Zinc import ATP-binding protein ZnuC, found in Yersinia pseudotuberculosis serotype I (strain IP32953).